Here is a 327-residue protein sequence, read N- to C-terminus: Acetaldehyde dehydrogenase 5 (327 aa).

15–18 serves as a coordination point for NAD(+); that stretch reads SGNI. Cys133 acts as the Acyl-thioester intermediate in catalysis. NAD(+) contacts are provided by residues 164 to 172 and Asn297; that span reads SAGPGTRAN.

It belongs to the acetaldehyde dehydrogenase family.

The catalysed reaction is acetaldehyde + NAD(+) + CoA = acetyl-CoA + NADH + H(+). The polypeptide is Acetaldehyde dehydrogenase 5 (Rhodococcus jostii (strain RHA1)).